The chain runs to 381 residues: tRNA pseudouridine synthase D (381 aa).

Asp-81 acts as the Nucleophile in catalysis. The TRUD domain occupies 160–335 (GMPNYFGSQR…TLGSRRFFWV (176 aa)).

This sequence belongs to the pseudouridine synthase TruD family.

The enzyme catalyses uridine(13) in tRNA = pseudouridine(13) in tRNA. Responsible for synthesis of pseudouridine from uracil-13 in transfer RNAs. This chain is tRNA pseudouridine synthase D, found in Helicobacter pylori (strain P12).